The chain runs to 788 residues: Probable phosphoketolase 1 (788 aa).

It belongs to the XFP family. Thiamine diphosphate serves as cofactor.

This Lactiplantibacillus plantarum (strain ATCC BAA-793 / NCIMB 8826 / WCFS1) (Lactobacillus plantarum) protein is Probable phosphoketolase 1.